A 197-amino-acid polypeptide reads, in one-letter code: Imidazoleglycerol-phosphate dehydratase (197 aa).

This sequence belongs to the imidazoleglycerol-phosphate dehydratase family.

It localises to the cytoplasm. The catalysed reaction is D-erythro-1-(imidazol-4-yl)glycerol 3-phosphate = 3-(imidazol-4-yl)-2-oxopropyl phosphate + H2O. Its pathway is amino-acid biosynthesis; L-histidine biosynthesis; L-histidine from 5-phospho-alpha-D-ribose 1-diphosphate: step 6/9. The sequence is that of Imidazoleglycerol-phosphate dehydratase from Rhodopseudomonas palustris (strain BisB5).